The sequence spans 457 residues: Cysteine--tRNA ligase (457 aa).

Cysteine 29 serves as a coordination point for Zn(2+). The 'HIGH' region signature appears at 31 to 41; sequence PTVYDNPHIGN. Residues cysteine 214, histidine 239, and glutamate 243 each contribute to the Zn(2+) site. The 'KMSKS' region signature appears at 272–276; sequence KMSKS. Position 275 (lysine 275) interacts with ATP.

It belongs to the class-I aminoacyl-tRNA synthetase family. As to quaternary structure, monomer. Requires Zn(2+) as cofactor.

Its subcellular location is the cytoplasm. The enzyme catalyses tRNA(Cys) + L-cysteine + ATP = L-cysteinyl-tRNA(Cys) + AMP + diphosphate. The chain is Cysteine--tRNA ligase (cysS) from Rickettsia prowazekii (strain Madrid E).